Reading from the N-terminus, the 317-residue chain is NAC domain-containing protein 55 (317 aa).

Residues 14 to 162 enclose the NAC domain; it reads LPPGFRFYPT…DWVLCRIYKK (149 aa). Residues 111 to 168 mediate DNA binding; the sequence is VGIKKALVFYIGKAPKGTKTNWIMHEYRLIEPSRRNGSTKLDDWVLCRIYKKQTSAQK.

As to expression, expressed in leaves.

The protein localises to the nucleus. Its function is as follows. Transcription factors that bind specifically to the 5'-CATGTG-3' motif. In Arabidopsis thaliana (Mouse-ear cress), this protein is NAC domain-containing protein 55 (NAC055).